A 35-amino-acid polypeptide reads, in one-letter code: Photosystem II reaction center protein T (35 aa).

Residues 3–23 form a helical membrane-spanning segment; it reads ALVYTFLLVGTLGIIFFAIFF.

This sequence belongs to the PsbT family. As to quaternary structure, PSII is composed of 1 copy each of membrane proteins PsbA, PsbB, PsbC, PsbD, PsbE, PsbF, PsbH, PsbI, PsbJ, PsbK, PsbL, PsbM, PsbT, PsbY, PsbZ, Psb30/Ycf12, at least 3 peripheral proteins of the oxygen-evolving complex and a large number of cofactors. It forms dimeric complexes.

Its subcellular location is the plastid. It is found in the chloroplast thylakoid membrane. Found at the monomer-monomer interface of the photosystem II (PS II) dimer, plays a role in assembly and dimerization of PSII. PSII is a light-driven water plastoquinone oxidoreductase, using light energy to abstract electrons from H(2)O, generating a proton gradient subsequently used for ATP formation. This Marchantia polymorpha (Common liverwort) protein is Photosystem II reaction center protein T.